We begin with the raw amino-acid sequence, 605 residues long: Replication and transcription activator (605 aa).

Disordered regions lie at residues 307–380 and 447–499; these read SLPS…AEPE and RIRP…AVTP. Over residues 321–338 the composition is skewed to low complexity; that stretch reads SADCGDSSSSSSDSGNSD. Over residues 341 to 353 the composition is skewed to basic and acidic residues; the sequence is QSEREEARAEAPR. The span at 355 to 364 shows a compositional bias: basic residues; sequence RAPKSRRTSR.

It belongs to the herpesviridae Rta family. As to quaternary structure, interacts with human ATF7IP protein, leading to promote and regulate host genes in virus-infected cells. Interacts with RNA polymerase III complex; this interaction downregulates small RNA transcription and 5'-pppRNA production.

The protein resides in the host nucleus. It localises to the virion tegument. Its function is as follows. Immediate-early transcription factor that controls the initiation of viral lytic gene expression and lytic reactivation from latency. Triggers lytic replication, and initiates a cellular senescence program in epithelial cells. Up-regulates human DCR3/TNFRSF6B by directly binding to its receptor. Globally induces a proteasome-dependent loss of SUMOylated proteins in the host cell and the loss of promeylocytic leukemia nuclear bodies. Improves the stability of the triplex capsid protein TRX1 by reducing the ubiquitination level of the latter. Mediates evasion of inflammasome activation and antiviral responses (T- and NK cell activation) during EBV early lytic infection. The sequence is that of Replication and transcription activator from Epstein-Barr virus (strain B95-8) (HHV-4).